The chain runs to 439 residues: MVTKHQIEEDHLDGATTDPEVKRVKLENNVEEIQPEQAETNKQEGTDKENKGKFEKETERIGGSEVVTDVEKGIVKFEFDGVEYTFKERPSVVEENEGKIEFRVVNNDNTKENMMVLTGLKNIFQKQLPKMPKEYIARLVYDRSHLSMAVIRKPLTVVGGITYRPFDKREFAEIVFCAISSTEQVRGYGAHLMNHLKDYVRNTSNIKYFLTYADNYAIGYFKKQGFTKEITLDKSIWMGYIKDYEGGTLMQCSMLPRIRYLDAGKILLLQEAALRRKIRTISKSHIVRPGLEQFKDLNNIKPIDPMTIPGLKEAGWTPEMDALAQRPKRGPHDAAIQNILTELQNHAAAWPFLQPVNKEEVPDYYDFIKEPMDLSTMEIKLESNKYQKMEDFIYDARLVFNNCRMYNGENTSYYKYANRLEKFFNNKVKEIPEYSHLID.

Composition is skewed to basic and acidic residues over residues 1–28 (MVTK…KLEN) and 39–59 (ETNK…KETE). Positions 1-59 (MVTKHQIEEDHLDGATTDPEVKRVKLENNVEEIQPEQAETNKQEGTDKENKGKFEKETE) are disordered. The 156-residue stretch at 100–255 (IEFRVVNNDN…GGTLMQCSML (156 aa)) folds into the N-acetyltransferase domain. E173 acts as the Proton donor/acceptor in catalysis. Residues 177-179 (CAI), 184-190 (QVRGYGA), and 216-219 (YAIG) each bind acetyl-CoA. Residues 327-431 (PKRGPHDAAI…KFFNNKVKEI (105 aa)) form the Bromo domain.

This sequence belongs to the acetyltransferase family. GCN5 subfamily. Component of the 1.8 MDa SAGA (Spt-Ada-Gcn5 acetyltransferase) complex, which is composed of 19 subunits TRA1, SPT7, TAF5, NGG1/ADA3, SGF73, SPT20/ADA5, SPT8, TAF12, TAF6, HFI1/ADA1, UBP8, GCN5, ADA2, SPT3, SGF29, TAF10, TAF9, SGF11 and SUS1. The SAGA complex is composed of 4 modules, namely the HAT (histone acetyltransferase) module (GCN5, ADA2, NGG1/ADA3 and SGF29), the DUB (deubiquitinating) module (UBP8, SGF11, SGF73 and SUS1), the core or TAF (TBP-associated factor) module (TAF5, TAF6, TAF9, TAF10 and TAF12), and the Tra1 or SPT (Suppressor of Ty) module (TRA1, HFI1/ADA1, SPT3, SPT7, SPT8 and SPT20/ADA5). The Tra1/SPT module binds activators, the core module recruits TBP (TATA-binding protein), the HAT module contains the histone H3 acetyltransferase GCN5, and the DUB module comprises the histone H2B deubiquitinase UBP8. Also identified in an altered form of SAGA, named SALSA (SAGA altered, Spt8 absent) or SLIK (SAGA-like) complex, which contains a C-terminal truncated form of SPT7 and is missing SPT8. However, it has been shown that the SAGA and SAGA-like SALSA/SLIK transcriptional coactivators are structurally and biochemically equivalent. Component of the 0.8 MDa ADA complex, a HAT complex distinct from SAGA, which at least consists of ADA2, NGG1/ADA3, AHC1, AHC2, SGF29 and GCN5. Component of an ADA/GCN5 complex that consists of HFI1/ADA1, ADA2, NGG1/ADA3, SPT20/ADA5 and GCN5 and probably is a subcomplex of SAGA.

It is found in the nucleus. The protein resides in the cytoplasm. It catalyses the reaction L-lysyl-[protein] + acetyl-CoA = N(6)-acetyl-L-lysyl-[protein] + CoA + H(+). It carries out the reaction (2E)-butenoyl-CoA + L-lysyl-[protein] = N(6)-(2E)-butenoyl-L-lysyl-[protein] + CoA + H(+). Its function is as follows. Histone acetyltransferase that acetylates histone H2B to form H2BK11ac and H2BK16ac, histone H3 to form H3K9ac, H3K14ac, H3K18ac, H3K23ac, H3K27ac and H3K36ac, with a lower preference histone H4 to form H4K8ac and H4K16ac, and contributes to H2A.Z acetylation. Acetylation of histones gives a specific tag for epigenetic transcription activation and elongation. Operates in concert with certain DNA-binding transcriptional activators such as GCN4 or HAP2/3/4. Its acetyltransferase activity seems to be dependent on the association in different multisubunit complexes. Component of the transcription coactivator SAGA complex. SAGA acts as a general cofactor required for essentially all RNA polymerase II transcription. At the promoters, SAGA is required for transcription pre-initiation complex (PIC) recruitment. It influences RNA polymerase II transcriptional activity through different activities such as TBP interaction (via core/TAF module) and promoter selectivity, interaction with transcription activators (via Tra1/SPT module), and chromatin modification through histone acetylation (via HAT module) and deubiquitination (via DUB module). SAGA preferentially acetylates histones H3 (to form H3K9ac, H3K14ac, H3K18ac and H3K23ac) and H2B and deubiquitinates histone H2B. SAGA interacts with DNA via upstream activating sequences (UASs). Also identified in a modified version of SAGA named SALSA or SLIK. The cleavage of SPT7 and the absence of the SPT8 subunit in SLIK neither drive any major conformational differences in its structure compared with SAGA, nor significantly affect HAT, DUB, or DNA-binding activities. Component of the ADA histone acetyltransferase complex, which preferentially acetylates nucleosomal histones H3 (to form H3K14ac and H3K18ac) and H2B. In addition to histone acetyltransferase, can use different acyl-CoA substrates, such as (2E)-butenoyl-CoA (crotonyl-CoA) and is able to mediate histone crotonylation. Controls the metaphase-to-anaphase transition and is required for correct chromosome segregation and centromere/kinetochore function in mitosis. May be involved in response to DNA damage by genotoxic agents. In Saccharomyces cerevisiae (strain ATCC 204508 / S288c) (Baker's yeast), this protein is Histone acetyltransferase GCN5.